The primary structure comprises 286 residues: ATP synthase gamma chain (286 aa).

Belongs to the ATPase gamma chain family. F-type ATPases have 2 components, CF(1) - the catalytic core - and CF(0) - the membrane proton channel. CF(1) has five subunits: alpha(3), beta(3), gamma(1), delta(1), epsilon(1). CF(0) has three main subunits: a, b and c.

The protein resides in the cell inner membrane. Its function is as follows. Produces ATP from ADP in the presence of a proton gradient across the membrane. The gamma chain is believed to be important in regulating ATPase activity and the flow of protons through the CF(0) complex. In Shewanella putrefaciens (strain CN-32 / ATCC BAA-453), this protein is ATP synthase gamma chain.